The following is a 665-amino-acid chain: DNA mismatch repair protein MutL (665 aa).

2 stretches are compositionally biased toward polar residues: residues 348-361 (LEAT…NGLS) and 407-421 (PSSQ…NSRY). Disordered stretches follow at residues 348–370 (LEAT…AEEG) and 385–445 (VHRG…STSA). Residues 426 to 445 (YSTNAASTNTASNYSHSTSA) show a composition bias toward low complexity.

This sequence belongs to the DNA mismatch repair MutL/HexB family.

Its function is as follows. This protein is involved in the repair of mismatches in DNA. It is required for dam-dependent methyl-directed DNA mismatch repair. May act as a 'molecular matchmaker', a protein that promotes the formation of a stable complex between two or more DNA-binding proteins in an ATP-dependent manner without itself being part of a final effector complex. This chain is DNA mismatch repair protein MutL, found in Shewanella denitrificans (strain OS217 / ATCC BAA-1090 / DSM 15013).